The primary structure comprises 175 residues: Co-chaperone protein HscB homolog (175 aa).

In terms of domain architecture, J spans 2-76 (NYFALFNLTP…RAEHMLELRG (75 aa)).

It belongs to the HscB family. In terms of assembly, interacts with HscA and stimulates its ATPase activity.

Its function is as follows. Co-chaperone involved in the maturation of iron-sulfur cluster-containing proteins. Seems to help targeting proteins to be folded toward HscA. This is Co-chaperone protein HscB homolog from Pseudoalteromonas atlantica (strain T6c / ATCC BAA-1087).